Reading from the N-terminus, the 762-residue chain is Cellulose synthase-like protein H2 (762 aa).

Residues 1–15 (MAVVAAAAATGSTTR) show a composition bias toward low complexity. Positions 1-39 (MAVVAAAAATGSTTRSGGGGGEGTRSGRKKPPPPPLQER) are disordered. A run of 2 helical transmembrane segments spans residues 47–67 (AWAWRLAGLAVLLLLLALLAL) and 81–101 (GVWRVALVCEAWFAALCALNV). Catalysis depends on residues aspartate 180 and aspartate 470. The next 6 membrane-spanning stretches (helical) occupy residues 541–561 (LAYLIVLGWPLRAPFELCYGL), 582–602 (FSVPLALFISYNTYNFMEYMA), 619–639 (IISVSAWTLAFLTVLLKSLGL), 673–693 (LPVFIPVTALAMLNIVAVTVG), 708–728 (APGIGEFMCCGWLVLCFFPFV), and 739–759 (GIPWSVKLKASLLVAMFVTFC).

It belongs to the glycosyltransferase 2 family. Plant cellulose synthase-like H subfamily.

Its subcellular location is the golgi apparatus membrane. Thought to be a Golgi-localized beta-glycan synthase that polymerize the backbones of noncellulosic polysaccharides (hemicelluloses) of plant cell wall. This chain is Cellulose synthase-like protein H2 (CSLH2), found in Oryza sativa subsp. japonica (Rice).